A 302-amino-acid polypeptide reads, in one-letter code: Oxygen-dependent coproporphyrinogen-III oxidase (302 aa).

A substrate-binding site is contributed by S94. H98 and H108 together coordinate a divalent metal cation. The Proton donor role is filled by H108. 110-112 is a binding site for substrate; that stretch reads NVR. 2 residues coordinate a divalent metal cation: H147 and H177. The segment at 242-277 is important for dimerization; the sequence is YVEFNLVYDRGTLFGLQTGGRTESILMSMPPLVRWQ. Substrate is bound at residue 260 to 262; the sequence is GGR.

The protein belongs to the aerobic coproporphyrinogen-III oxidase family. Homodimer. A divalent metal cation is required as a cofactor.

Its subcellular location is the cytoplasm. The catalysed reaction is coproporphyrinogen III + O2 + 2 H(+) = protoporphyrinogen IX + 2 CO2 + 2 H2O. The protein operates within porphyrin-containing compound metabolism; protoporphyrin-IX biosynthesis; protoporphyrinogen-IX from coproporphyrinogen-III (O2 route): step 1/1. Involved in the heme biosynthesis. Catalyzes the aerobic oxidative decarboxylation of propionate groups of rings A and B of coproporphyrinogen-III to yield the vinyl groups in protoporphyrinogen-IX. The polypeptide is Oxygen-dependent coproporphyrinogen-III oxidase (Shewanella putrefaciens (strain CN-32 / ATCC BAA-453)).